The following is a 142-amino-acid chain: Ribosome maturation factor RimP (142 aa).

The protein belongs to the RimP family.

The protein localises to the cytoplasm. Functionally, required for maturation of 30S ribosomal subunits. The protein is Ribosome maturation factor RimP of Wolinella succinogenes (strain ATCC 29543 / DSM 1740 / CCUG 13145 / JCM 31913 / LMG 7466 / NCTC 11488 / FDC 602W) (Vibrio succinogenes).